A 335-amino-acid chain; its full sequence is Ornithine carbamoyltransferase (335 aa).

Carbamoyl phosphate contacts are provided by residues 56–59 (STRT), Gln83, Arg107, and 134–137 (HPTQ). Residues Asn168, Asp232, and 236–237 (SM) each bind L-ornithine. Carbamoyl phosphate contacts are provided by residues 274-275 (CL) and Arg320.

This sequence belongs to the aspartate/ornithine carbamoyltransferase superfamily. OTCase family.

It is found in the cytoplasm. The enzyme catalyses carbamoyl phosphate + L-ornithine = L-citrulline + phosphate + H(+). It functions in the pathway amino-acid biosynthesis; L-arginine biosynthesis; L-arginine from L-ornithine and carbamoyl phosphate: step 1/3. Functionally, reversibly catalyzes the transfer of the carbamoyl group from carbamoyl phosphate (CP) to the N(epsilon) atom of ornithine (ORN) to produce L-citrulline. This is Ornithine carbamoyltransferase from Yersinia pseudotuberculosis serotype I (strain IP32953).